A 293-amino-acid chain; its full sequence is Ribulose bisphosphate carboxylase/oxygenase activase, chloroplastic (293 aa).

Pro-75–Val-82 contributes to the ATP binding site.

Belongs to the CbxX/CfxQ family. As to quaternary structure, forms homooligomers. Forms heterohexameric rings with the nuclear-encoded Rca subunit consisting of 3 of each nuclear- and plastidial-encoded subunits that alternate in the ring.

The protein resides in the plastid. It localises to the chloroplast. Required for the expression of ribulose 1,5-bisphosphate carboxylase/oxygenase (RuBisCo). ATPase involved in the activation of red-type RuBisCo, which tends to form inactive complexes with its substrate ribulose 1,5-bisphosphate (RuBP). Catalyzes the release of RuBP from inhibited RuBisCo in an ATP-dependent manner. Activation of RuBisCO involves the ATP-dependent carboxylation of the epsilon-amino group of lysine leading to a carbamate structure. The nuclear-encoded subunit plays a more critical role in activase function than the plastidial-encoded subunit. This is Ribulose bisphosphate carboxylase/oxygenase activase, chloroplastic from Cyanidioschyzon merolae (strain NIES-3377 / 10D) (Unicellular red alga).